The sequence spans 335 residues: Phosphatidylglycerol--prolipoprotein diacylglyceryl transferase (335 aa).

3 helical membrane passes run 31-51 (IYWY…TYSL), 67-87 (YIFL…LAIG), and 100-120 (LAIQ…FPLI). R163 provides a ligand contact to a 1,2-diacyl-sn-glycero-3-phospho-(1'-sn-glycerol). 3 helical membrane-spanning segments follow: residues 213-233 (PLFL…YFGL), 235-255 (YIKQ…YGVI), and 277-297 (SLLL…APIL).

It belongs to the Lgt family.

The protein resides in the cell membrane. It carries out the reaction L-cysteinyl-[prolipoprotein] + a 1,2-diacyl-sn-glycero-3-phospho-(1'-sn-glycerol) = an S-1,2-diacyl-sn-glyceryl-L-cysteinyl-[prolipoprotein] + sn-glycerol 1-phosphate + H(+). The protein operates within protein modification; lipoprotein biosynthesis (diacylglyceryl transfer). Its function is as follows. Catalyzes the transfer of the diacylglyceryl group from phosphatidylglycerol to the sulfhydryl group of the N-terminal cysteine of a prolipoprotein, the first step in the formation of mature lipoproteins. This Ureaplasma urealyticum serovar 10 (strain ATCC 33699 / Western) protein is Phosphatidylglycerol--prolipoprotein diacylglyceryl transferase.